We begin with the raw amino-acid sequence, 220 residues long: LHFPL tetraspan subfamily member 1 protein (220 aa).

A signal peptide spans 1 to 20; the sequence is MRSSLTMVGTLWAFLSLVTA. 2 consecutive transmembrane segments (helical) span residues 86–106 and 122–142; these read VVTG…VLGC and AAQF…PLGW. Asn153 carries an N-linked (GlcNAc...) asparagine glycan. The chain crosses the membrane as a helical span at residues 165 to 185; it reads LGWAYYCAGGGAAAAMLICTW.

It belongs to the LHFP family. As to expression, widely expressed. Expressed at high levels in lung, thymus, skeletal muscle, colon and ovary.

The protein resides in the membrane. This chain is LHFPL tetraspan subfamily member 1 protein, found in Homo sapiens (Human).